Here is a 508-residue protein sequence, read N- to C-terminus: Photosystem II CP47 reaction center protein (508 aa).

6 consecutive transmembrane segments (helical) span residues 21–36, 101–115, 140–156, 203–218, 237–252, and 457–472; these read AVHL…WAGS, IVLS…VWHW, GIHL…FGAF, IAAG…FHLT, VLSS…AFVV, and SFAL…HGSR.

The protein belongs to the PsbB/PsbC family. PsbB subfamily. As to quaternary structure, PSII is composed of 1 copy each of membrane proteins PsbA, PsbB, PsbC, PsbD, PsbE, PsbF, PsbH, PsbI, PsbJ, PsbK, PsbL, PsbM, PsbT, PsbX, PsbY, PsbZ, Psb30/Ycf12, peripheral proteins PsbO, CyanoQ (PsbQ), PsbU, PsbV and a large number of cofactors. It forms dimeric complexes. It depends on Binds multiple chlorophylls. PSII binds additional chlorophylls, carotenoids and specific lipids. as a cofactor.

The protein localises to the cellular thylakoid membrane. Its function is as follows. One of the components of the core complex of photosystem II (PSII). It binds chlorophyll and helps catalyze the primary light-induced photochemical processes of PSII. PSII is a light-driven water:plastoquinone oxidoreductase, using light energy to abstract electrons from H(2)O, generating O(2) and a proton gradient subsequently used for ATP formation. The polypeptide is Photosystem II CP47 reaction center protein (Synechococcus elongatus (strain ATCC 33912 / PCC 7942 / FACHB-805) (Anacystis nidulans R2)).